A 351-amino-acid chain; its full sequence is Formyl peptide receptor 2 (351 aa).

The Extracellular portion of the chain corresponds to 1-29; sequence MESNYSIHLNGSEVVVYDSTISRVLWILS. Asparagine 4 and asparagine 10 each carry an N-linked (GlcNAc...) asparagine glycan. The chain crosses the membrane as a helical span at residues 30 to 50; that stretch reads MVVVSITFFLGVLGNGLVIWV. Residues 51 to 61 lie on the Cytoplasmic side of the membrane; that stretch reads AGFRMPHTVTT. A helical transmembrane segment spans residues 62–82; sequence IWYLNLALADFSFTATLPFLL. Residues 83–99 lie on the Extracellular side of the membrane; that stretch reads VEMAMKEKWPFGWFLCK. A disulfide bond links cysteine 98 and cysteine 176. The helical transmembrane segment at 100 to 120 threads the bilayer; that stretch reads LVHIVVDVNLFGSVFLIALIA. Residues 121-144 are Cytoplasmic-facing; sequence LDRCICVLHPVWAQNHRTVSLARK. Residues 145–165 form a helical membrane-spanning segment; it reads VVVGPWIFALILTLPIFIFLT. Residues 166–205 are Extracellular-facing; it reads TVRIPGGDVYCTFNFGSWAQTDEEKLNTAITFVTTRGIIR. A helical membrane pass occupies residues 206–226; that stretch reads FLIGFSMPMSIVAVCYGLIAV. Residues 227-241 lie on the Cytoplasmic side of the membrane; it reads KINRRNLVNSSRPLR. The helical transmembrane segment at 242–262 threads the bilayer; that stretch reads VLTAVVASFFICWFPFQLVAL. Residues 263–282 lie on the Extracellular side of the membrane; sequence LGTVWFKETLLSGSYKILDM. A helical transmembrane segment spans residues 283 to 305; sequence FVNPTSSLAYFNSCLNPMLYVFM. Residues 306–351 are Cytoplasmic-facing; that stretch reads GQDFRERFIHSLPYSLERALSEDSGQTSDSSTSSTSPPADIELKAP. Residues 325–351 form a disordered region; that stretch reads LSEDSGQTSDSSTSSTSPPADIELKAP. A compositionally biased stretch (low complexity) spans 327–341; that stretch reads EDSGQTSDSSTSSTS.

It belongs to the G-protein coupled receptor 1 family. In terms of assembly, interacts with Amyloid-beta protein 42, product of APP; the interaction takes place at the cell surface and the complex is then rapidly internalized. As to expression, primarily expressed in neutrophils. Not detected in vomeronasal neurons.

It is found in the cell membrane. In terms of biological role, high affinity receptor for N-formyl-methionyl peptides (FMLP), which are powerful neutrophil chemotactic factors. Stimulates chemotaxis in immune cells to site of infection or tissue damage upon recognition of several ligands, such as FMLP, or ligand involved in cell damage, disease or inflammation. Receptor for the chemokine-like protein FAM19A5, mediating FAM19A5-stimulated macrophage chemotaxis and the inhibitory effect on TNFSF11/RANKL-induced osteoclast differentiation. This Mus musculus (Mouse) protein is Formyl peptide receptor 2 (Fpr2).